A 358-amino-acid polypeptide reads, in one-letter code: B3 domain-containing protein Os12g0592300 (358 aa).

A DNA-binding region (TF-B3 1) is located at residues 25–122 (RIRFFRLMTG…SFDVLIFDAS (98 aa)). The segment at 148-215 (YHLSDSEDTS…EKSDDDDEHA (68 aa)) is disordered. Positions 156–181 (TSTPSTFLVGSPHKASTSKKLNGKTK) are enriched in polar residues. Positions 203-215 (IEEEKSDDDDEHA) are enriched in acidic residues. Residues 252-350 (FVTVLQAPQI…TMTVHVIGKV (99 aa)) constitute a DNA-binding region (TF-B3 2).

It localises to the nucleus. In Oryza sativa subsp. japonica (Rice), this protein is B3 domain-containing protein Os12g0592300.